The sequence spans 333 residues: Nucleoid-associated protein APL_0429 (333 aa).

Belongs to the YejK family.

It is found in the cytoplasm. The protein localises to the nucleoid. In Actinobacillus pleuropneumoniae serotype 5b (strain L20), this protein is Nucleoid-associated protein APL_0429.